The primary structure comprises 214 residues: Variable small protein 1 (214 aa).

Positions 1–18 (MRKRISAIIMTLFMVFMS) are cleaved as a signal peptide. Cys-19 is lipidated: N-palmitoyl cysteine. Cys-19 carries S-diacylglycerol cysteine lipidation.

The protein belongs to the variable small protein (Vsp) family.

The protein resides in the cell outer membrane. Functionally, the Vlp and Vsp proteins are antigenically distinct proteins, only one vlp or vsp gene is transcriptionally active at any one time. Switching between these genes is a mechanism of host immune response evasion. The protein is Variable small protein 1 of Borrelia hermsii.